A 343-amino-acid chain; its full sequence is Tribbles homolog 2 (343 aa).

The segment at 25 to 50 (EELSSIRSAEPSQSFSPNLGSPSPPE) is disordered. Positions 29–45 (SIRSAEPSQSFSPNLGS) are enriched in polar residues. A Protein kinase domain is found at 61–308 (IGKYLLLEPL…SQEILDHPWF (248 aa)).

The protein belongs to the protein kinase superfamily. CAMK Ser/Thr protein kinase family. Tribbles subfamily. As to expression, highly expressed in the thyroid, also present in ovary and cerebrum.

The protein resides in the cytoplasm. It localises to the cytoskeleton. Its function is as follows. Interacts with MAPK kinases and regulates activation of MAP kinases. Does not display kinase activity. This is Tribbles homolog 2 from Canis lupus familiaris (Dog).